A 175-amino-acid polypeptide reads, in one-letter code: Apoptosis regulator Bcl-2 homolog (175 aa).

The helical transmembrane segment at 152–174 (YYVTRYFRVAAFIITSLAVINLF) threads the bilayer.

As to quaternary structure, interacts with host BAK1 and BAX as well as other BH3-containing proteins including BIM, BID or PUMA.

Its subcellular location is the host membrane. Its function is as follows. Plays a role in the inhibition of host apoptosis. Interacts with host proapoptotic factors BAK1 and BAX to supposedly prevent their activation. This Canarypox virus (CNPV) protein is Apoptosis regulator Bcl-2 homolog (CNPV058).